The following is a 211-amino-acid chain: Thiamine-phosphate synthase (211 aa).

4-amino-2-methyl-5-(diphosphooxymethyl)pyrimidine contacts are provided by residues 37-41 (QLRIK) and N69. 2 residues coordinate Mg(2+): D70 and D89. S108 contributes to the 4-amino-2-methyl-5-(diphosphooxymethyl)pyrimidine binding site. A 2-[(2R,5Z)-2-carboxy-4-methylthiazol-5(2H)-ylidene]ethyl phosphate-binding site is contributed by 134–136 (TQT). K137 contacts 4-amino-2-methyl-5-(diphosphooxymethyl)pyrimidine. Residues G166 and 186–187 (VS) contribute to the 2-[(2R,5Z)-2-carboxy-4-methylthiazol-5(2H)-ylidene]ethyl phosphate site.

It belongs to the thiamine-phosphate synthase family. Mg(2+) is required as a cofactor.

The catalysed reaction is 2-[(2R,5Z)-2-carboxy-4-methylthiazol-5(2H)-ylidene]ethyl phosphate + 4-amino-2-methyl-5-(diphosphooxymethyl)pyrimidine + 2 H(+) = thiamine phosphate + CO2 + diphosphate. It catalyses the reaction 2-(2-carboxy-4-methylthiazol-5-yl)ethyl phosphate + 4-amino-2-methyl-5-(diphosphooxymethyl)pyrimidine + 2 H(+) = thiamine phosphate + CO2 + diphosphate. The enzyme catalyses 4-methyl-5-(2-phosphooxyethyl)-thiazole + 4-amino-2-methyl-5-(diphosphooxymethyl)pyrimidine + H(+) = thiamine phosphate + diphosphate. The protein operates within cofactor biosynthesis; thiamine diphosphate biosynthesis; thiamine phosphate from 4-amino-2-methyl-5-diphosphomethylpyrimidine and 4-methyl-5-(2-phosphoethyl)-thiazole: step 1/1. Functionally, condenses 4-methyl-5-(beta-hydroxyethyl)thiazole monophosphate (THZ-P) and 2-methyl-4-amino-5-hydroxymethyl pyrimidine pyrophosphate (HMP-PP) to form thiamine monophosphate (TMP). The sequence is that of Thiamine-phosphate synthase from Klebsiella pneumoniae subsp. pneumoniae (strain ATCC 700721 / MGH 78578).